A 238-amino-acid chain; its full sequence is Ribonuclease PH (238 aa).

Phosphate is bound by residues Arg87 and 125–127 (GTR).

The protein belongs to the RNase PH family. In terms of assembly, homohexameric ring arranged as a trimer of dimers.

The enzyme catalyses tRNA(n+1) + phosphate = tRNA(n) + a ribonucleoside 5'-diphosphate. Its function is as follows. Phosphorolytic 3'-5' exoribonuclease that plays an important role in tRNA 3'-end maturation. Removes nucleotide residues following the 3'-CCA terminus of tRNAs; can also add nucleotides to the ends of RNA molecules by using nucleoside diphosphates as substrates, but this may not be physiologically important. Probably plays a role in initiation of 16S rRNA degradation (leading to ribosome degradation) during starvation. In Synechococcus elongatus (strain ATCC 33912 / PCC 7942 / FACHB-805) (Anacystis nidulans R2), this protein is Ribonuclease PH.